The chain runs to 207 residues: DNA protection during starvation protein 1 (207 aa).

Positions 1 to 12 (MTKKSTKSEAAS) are enriched in basic and acidic residues. Residues 1–31 (MTKKSTKSEAASKTKKSGVPETGAQGVRAGG) form a disordered region. Fe cation contacts are provided by H83, D110, and E114.

This sequence belongs to the Dps family. As to quaternary structure, the 12 subunits form a hollow sphere into which the mineral iron core of up to 500 Fe(3+) can be deposited. The homododecameric forms at higher concentration of salt, the homodimeric form under reducing, low-salt conditions. The assembly of the dodecamer is irreversible.

It is found in the cytoplasm. It localises to the nucleoid. The enzyme catalyses 2 Fe(2+) + H2O2 + 2 H(+) = 2 Fe(3+) + 2 H2O. In terms of biological role, protects DNA from oxidative damage by sequestering intracellular Fe(2+) ion and storing it in the form of Fe(3+) oxyhydroxide mineral. One hydrogen peroxide oxidizes two Fe(2+) ions, which prevents hydroxyl radical production by the Fenton reaction. Both oligomeric forms of dps exhibit ferroxidase activity and DNA binding. Dodecameric dps is capable of Fe(2+) oxidation/mineralization. Only dimeric dps affords efficient DNA protection against hydroxyl radical-mediated cleavage. The sequence is that of DNA protection during starvation protein 1 (dps1) from Deinococcus radiodurans (strain ATCC 13939 / DSM 20539 / JCM 16871 / CCUG 27074 / LMG 4051 / NBRC 15346 / NCIMB 9279 / VKM B-1422 / R1).